The following is a 128-amino-acid chain: MAGSLSWVAGRRLWGLVPLACRSFFLGVPRLFHVRVTLPPPKVIDRWNQKRAMFGVYDNIGILGNFEKHPKELIKGPVWLRGWKGNELQRCIRKKRMVGNRMFIDDLHNLNKRISFLYKRFNRHGKHR.

The transit peptide at 1 to 31 (MAGSLSWVAGRRLWGLVPLACRSFFLGVPRL) directs the protein to the mitochondrion.

Belongs to the mitochondrion-specific ribosomal protein mL51 family. In terms of assembly, component of the mitochondrial ribosome large subunit (39S) which comprises a 16S rRNA and about 50 distinct proteins. Interacts with OXA1L.

The protein localises to the mitochondrion. The polypeptide is Large ribosomal subunit protein mL51 (MRPL51) (Bos taurus (Bovine)).